Reading from the N-terminus, the 323-residue chain is Ig gamma chain C region (323 aa).

3 consecutive Ig-like domains span residues 6-96 (PSVF…KTVA), 114-213 (PSVF…KTIS), and 222-318 (PKVY…KSIS).

The sequence is that of Ig gamma chain C region from Oryctolagus cuniculus (Rabbit).